The following is a 117-amino-acid chain: UPF0642 protein C32H8.05 (117 aa).

The interval 39–117 is disordered; it reads DQVNDLTKSS…SNFSKFLKKK (79 aa). Positions 93–106 are enriched in basic residues; it reads KWAKKHLKKGKRAK. Positions 107-117 are enriched in low complexity; the sequence is NSNFSKFLKKK.

This sequence belongs to the UPF0642 family.

The protein localises to the nucleus. It localises to the nucleolus. The polypeptide is UPF0642 protein C32H8.05 (Schizosaccharomyces pombe (strain 972 / ATCC 24843) (Fission yeast)).